Here is a 242-residue protein sequence, read N- to C-terminus: ATP-dependent dethiobiotin synthetase BioD (242 aa).

12-17 (EVGKTV) serves as a coordination point for ATP. A Mg(2+)-binding site is contributed by threonine 16. Lysine 37 is a catalytic residue. Serine 41 contacts substrate. ATP-binding positions include aspartate 51 and 112 to 115 (EGAG). Mg(2+) contacts are provided by aspartate 51 and glutamate 112.

The protein belongs to the dethiobiotin synthetase family. Homodimer. The cofactor is Mg(2+).

It localises to the cytoplasm. It carries out the reaction (7R,8S)-7,8-diammoniononanoate + CO2 + ATP = (4R,5S)-dethiobiotin + ADP + phosphate + 3 H(+). It functions in the pathway cofactor biosynthesis; biotin biosynthesis; biotin from 7,8-diaminononanoate: step 1/2. In terms of biological role, catalyzes a mechanistically unusual reaction, the ATP-dependent insertion of CO2 between the N7 and N8 nitrogen atoms of 7,8-diaminopelargonic acid (DAPA, also called 7,8-diammoniononanoate) to form a ureido ring. The polypeptide is ATP-dependent dethiobiotin synthetase BioD (Bacillus cereus (strain AH820)).